The chain runs to 483 residues: tRNA sulfurtransferase (483 aa).

Residues 63-167 form the THUMP domain; the sequence is GQLIDMLART…DDQVYLVTKK (105 aa). Residues 185–186, Lys267, Gly289, and Gln298 each bind ATP; that span reads LI. Cys346 and Cys457 are oxidised to a cystine. The region spanning 405 to 483 is the Rhodanese domain; the sequence is LPVSAKVIDI…GYTNVGVYRP (79 aa). Residue Cys457 is the Cysteine persulfide intermediate of the active site.

It belongs to the ThiI family.

The protein localises to the cytoplasm. It catalyses the reaction [ThiI sulfur-carrier protein]-S-sulfanyl-L-cysteine + a uridine in tRNA + 2 reduced [2Fe-2S]-[ferredoxin] + ATP + H(+) = [ThiI sulfur-carrier protein]-L-cysteine + a 4-thiouridine in tRNA + 2 oxidized [2Fe-2S]-[ferredoxin] + AMP + diphosphate. The enzyme catalyses [ThiS sulfur-carrier protein]-C-terminal Gly-Gly-AMP + S-sulfanyl-L-cysteinyl-[cysteine desulfurase] + AH2 = [ThiS sulfur-carrier protein]-C-terminal-Gly-aminoethanethioate + L-cysteinyl-[cysteine desulfurase] + A + AMP + 2 H(+). The protein operates within cofactor biosynthesis; thiamine diphosphate biosynthesis. Functionally, catalyzes the ATP-dependent transfer of a sulfur to tRNA to produce 4-thiouridine in position 8 of tRNAs, which functions as a near-UV photosensor. Also catalyzes the transfer of sulfur to the sulfur carrier protein ThiS, forming ThiS-thiocarboxylate. This is a step in the synthesis of thiazole, in the thiamine biosynthesis pathway. The sulfur is donated as persulfide by IscS. This is tRNA sulfurtransferase from Saccharophagus degradans (strain 2-40 / ATCC 43961 / DSM 17024).